The primary structure comprises 155 residues: Large ribosomal subunit protein uL16m (155 aa).

The protein belongs to the universal ribosomal protein uL16 family.

The protein localises to the mitochondrion. The chain is Large ribosomal subunit protein uL16m (RPL16) from Petunia hybrida (Petunia).